The chain runs to 228 residues: MTKQAEETQKPIIFAPETYQYDKFTLNEKQLTDDPIDLFTKWFNEAKEDPRETLPEAITFSSAELPSGRVSSRILLFKELDHRGFTIYSNWGTSRKAHDIATNPNAAIVFFWKDLQRQVRVEGITEHVNRETSERYFKTRPRGSKIGAWASRQSDVIKNREELDELTQKNTERFKDAEDIPCPDYWGGLRIVPLEIEFWQGRPSRLHDRFVYRRKTENDPWKVVRLAP.

20–23 (QYDK) is a pyridoxal 5'-phosphate binding site. Residue Lys-29 forms a Glycyl lysine isopeptide (Lys-Gly) (interchain with G-Cter in ubiquitin) linkage. Residue 73–76 (RILL) participates in FMN binding. Residue Lys-78 coordinates pyridoxal 5'-phosphate. FMN-binding positions include 88–89 (YS), 95–96 (RK), and Gln-118. Pyridoxal 5'-phosphate is bound by residues Tyr-136, Arg-140, and Ser-144. FMN contacts are provided by residues 153–154 (QS) and Trp-199. 205 to 207 (RLH) contacts pyridoxal 5'-phosphate. Residue Arg-209 participates in FMN binding.

Belongs to the pyridoxamine 5'-phosphate oxidase family. In terms of assembly, homodimer. It depends on FMN as a cofactor.

The protein localises to the mitochondrion intermembrane space. It carries out the reaction pyridoxamine 5'-phosphate + O2 + H2O = pyridoxal 5'-phosphate + H2O2 + NH4(+). The enzyme catalyses pyridoxine 5'-phosphate + O2 = pyridoxal 5'-phosphate + H2O2. The protein operates within cofactor metabolism; pyridoxal 5'-phosphate salvage; pyridoxal 5'-phosphate from pyridoxamine 5'-phosphate: step 1/1. It participates in cofactor metabolism; pyridoxal 5'-phosphate salvage; pyridoxal 5'-phosphate from pyridoxine 5'-phosphate: step 1/1. Catalyzes the oxidation of either pyridoxine 5'-phosphate (PNP) or pyridoxamine 5'-phosphate (PMP) into pyridoxal 5'-phosphate (PLP). The sequence is that of Pyridoxamine 5'-phosphate oxidase (PDX3) from Saccharomyces cerevisiae (strain ATCC 204508 / S288c) (Baker's yeast).